We begin with the raw amino-acid sequence, 173 residues long: dCTP deaminase, dUMP-forming (173 aa).

Residues 93–98 (RSSTGR), Asp111, 119–121 (TLE), Gln138, and Tyr151 contribute to the dCTP site. Glu121 (proton donor/acceptor) is an active-site residue.

This sequence belongs to the dCTP deaminase family. As to quaternary structure, homotrimer.

The enzyme catalyses dCTP + 2 H2O = dUMP + NH4(+) + diphosphate. It functions in the pathway pyrimidine metabolism; dUMP biosynthesis; dUMP from dCTP: step 1/1. Its function is as follows. Bifunctional enzyme that catalyzes both the deamination of dCTP to dUTP and the hydrolysis of dUTP to dUMP without releasing the toxic dUTP intermediate. The protein is dCTP deaminase, dUMP-forming of Clostridium botulinum (strain Alaska E43 / Type E3).